Reading from the N-terminus, the 125-residue chain is uncharacterized protein (125 aa).

Residues 10-26 traverse the membrane as a helical segment; sequence IIILVCLMFLAIMVYIY.

The protein localises to the membrane. This is an uncharacterized protein from Rickettsia prowazekii (strain Madrid E).